The following is a 1944-amino-acid chain: Chromatin-remodeling ATPase INO80 (1944 aa).

Positions 1-518 (MEPSKFHSTV…QANGLTKQKA (518 aa)) are disordered. The segment covering 73–83 (QHHYSASSAAS) has biased composition (low complexity). A compositionally biased stretch (polar residues) spans 84-98 (GPQSTYNGANNGVPQ). Over residues 101–111 (SHSRSNSHSRH) the composition is skewed to basic residues. Polar residues-rich tracts occupy residues 139–149 (SPQTSGLQAPQ), 208–223 (AGSS…VSTP), and 289–307 (NILN…QAES). The segment covering 312 to 323 (AAVPAATPSRAA) has biased composition (low complexity). The segment covering 327-336 (SFSNILSSSE) has biased composition (polar residues). 2 stretches are compositionally biased toward basic and acidic residues: residues 356–382 (PEPE…EPSK) and 429–464 (ESEK…ERVT). Coiled coils occupy residues 506–563 (AKRQ…KALE) and 624–696 (EQEL…KGIK). Residues 715–815 (ATFSADSMEP…EEPPPKKKGK (101 aa)) are disordered. The segment covering 727–739 (GKGKGRAGNRPKK) has biased composition (basic residues). Composition is skewed to basic and acidic residues over residues 740–751 (SKEQKQAEKEAA), 782–791 (LSKDKDRDVD), and 800–815 (TEIK…KKGK). In terms of domain architecture, DBINO spans 840–965 (IWRDMARKDV…SHFIGKKIKT (126 aa)). Positions 908 to 953 (KRNEREERDLRKAAERQELENARKEEADREAARQKRKLNFLISQTE) form a coiled coil. Over residues 966–986 (DEVERSTDRPEVAAEEQKNKP) the composition is skewed to basic and acidic residues. The disordered stretch occupies residues 966–1003 (DEVERSTDRPEVAAEEQKNKPAGENALTVKEPTGPVGA). The 173-residue stretch at 1090–1262 (VNLYEQGING…WALLHFIMPS (173 aa)) folds into the Helicase ATP-binding domain. 1103–1110 (DEMGLGKT) contacts ATP. Positions 1213-1216 (DEAQ) match the DEAQ box motif. One can recognise a Helicase C-terminal domain in the interval 1663 to 1818 (KLDELLFKLK…GGAGASSGVD (156 aa)). The span at 1862-1873 (AKKRGGGKRKKV) shows a compositional bias: basic residues. A disordered region spans residues 1862–1944 (AKKRGGGKRK…LAIADGQMDM (83 aa)). Residues 1887-1900 (EMYHEGEGNFDDNK) show a composition bias toward basic and acidic residues. A compositionally biased stretch (basic residues) spans 1918–1932 (GKKKKATGKKAKTTK).

This sequence belongs to the SNF2/RAD54 helicase family. Component of the INO80 chromatin-remodeling complex.

It localises to the nucleus. It catalyses the reaction ATP + H2O = ADP + phosphate + H(+). Functionally, ATPase component of the INO80 complex which remodels chromatin by shifting nucleosomes and is involved in DNA repair. The sequence is that of Chromatin-remodeling ATPase INO80 (INO80) from Pyricularia oryzae (strain 70-15 / ATCC MYA-4617 / FGSC 8958) (Rice blast fungus).